Consider the following 122-residue polypeptide: Large ribosomal subunit protein uL14 (122 aa).

This sequence belongs to the universal ribosomal protein uL14 family. As to quaternary structure, part of the 50S ribosomal subunit. Forms a cluster with proteins L3 and L19. In the 70S ribosome, L14 and L19 interact and together make contacts with the 16S rRNA in bridges B5 and B8.

In terms of biological role, binds to 23S rRNA. Forms part of two intersubunit bridges in the 70S ribosome. The polypeptide is Large ribosomal subunit protein uL14 (Heliobacterium modesticaldum (strain ATCC 51547 / Ice1)).